The following is a 401-amino-acid chain: Elongation factor Tu 1 (401 aa).

The region spanning 10–209 (KPHVNVGTIG…AVDEYIPTPV (200 aa)) is the tr-type G domain. The G1 stretch occupies residues 19–26 (GHVDHGKT). 19-26 (GHVDHGKT) serves as a coordination point for GTP. Residue Thr26 coordinates Mg(2+). The G2 stretch occupies residues 60-64 (GITIA). A G3 region spans residues 81-84 (DCPG). Residues 81–85 (DCPGH) and 136–139 (NKVD) each bind GTP. The G4 stretch occupies residues 136-139 (NKVD). A G5 region spans residues 174 to 176 (SAL).

It belongs to the TRAFAC class translation factor GTPase superfamily. Classic translation factor GTPase family. EF-Tu/EF-1A subfamily. In terms of assembly, monomer.

It localises to the cytoplasm. It carries out the reaction GTP + H2O = GDP + phosphate + H(+). Its function is as follows. GTP hydrolase that promotes the GTP-dependent binding of aminoacyl-tRNA to the A-site of ribosomes during protein biosynthesis. This is Elongation factor Tu 1 from Roseiflexus sp. (strain RS-1).